Reading from the N-terminus, the 293-residue chain is Ribosomal protein L11 methyltransferase (293 aa).

Residues Thr145, Gly166, Asp188, and Asn230 each coordinate S-adenosyl-L-methionine.

The protein belongs to the methyltransferase superfamily. PrmA family.

It is found in the cytoplasm. It catalyses the reaction L-lysyl-[protein] + 3 S-adenosyl-L-methionine = N(6),N(6),N(6)-trimethyl-L-lysyl-[protein] + 3 S-adenosyl-L-homocysteine + 3 H(+). Functionally, methylates ribosomal protein L11. The protein is Ribosomal protein L11 methyltransferase of Shewanella sediminis (strain HAW-EB3).